Reading from the N-terminus, the 523-residue chain is Sorting nexin-2 (523 aa).

The tract at residues 1–104 (MAAEREPPPL…EPSPAVTPVT (104 aa)) is disordered. Composition is skewed to low complexity over residues 27 to 50 (LFTS…LPAE) and 93 to 104 (SSEPSPAVTPVT). The residue at position 97 (serine 97) is a Phosphoserine. A phosphothreonine mark is found at threonine 101 and threonine 104. Phosphoserine occurs at positions 117 and 119. Residues 140–269 (FDIEIGVSDP…QFLESSELPR (130 aa)) form the PX domain. Positions 183, 185, 211, and 235 each coordinate a 1,2-diacyl-sn-glycero-3-phospho-(1D-myo-inositol-3-phosphate). Position 185 is a phosphoserine (serine 185). The segment at 260–523 (QFLESSELPR…AFLPEAKAIA (264 aa)) is interaction with RhoG. The residue at position 277 (serine 277) is a Phosphoserine. The membrane-binding amphipathic helix stretch occupies residues 278–295 (GAGILRMVNKAADAVNKM). The BAR domain occupies 299–523 (MNESDAWFEE…AFLPEAKAIA (225 aa)). Lysine 473 carries the post-translational modification N6-acetyllysine.

This sequence belongs to the sorting nexin family. As to quaternary structure, predominantly forms heterodimers with BAR domain-containing sorting nexins SNX5, SNX6 and SNX32; can self-associate to form homodimers. The heterodimers are proposed to self-assemble into helical arrays on the membrane to stabilize and expand local membrane curvature underlying endosomal tubule formation. Thought to be a component of the originally described retromer complex (also called SNX-BAR retromer) which is a pentamer containing the heterotrimeric retromer cargo-selective complex (CSC), also described as vacuolar protein sorting subcomplex (VPS), and a heterodimeric membrane-deforming subcomplex formed between SNX1 or SNX2 and SNX5 or SNX6 (also called SNX-BAR subcomplex); the respective CSC and SNX-BAR subcomplexes associate with low affinity. Interacts with SNX5, SNX6, SNX32, VPS26A, VPS29, VPS35, FNBP1, KALRN, RHOG (GDP-bound form).

The protein localises to the early endosome membrane. It is found in the cell projection. The protein resides in the lamellipodium. In terms of biological role, involved in several stages of intracellular trafficking. Interacts with membranes containing phosphatidylinositol 3-phosphate (PtdIns(3P)) or phosphatidylinositol 3,5-bisphosphate (PtdIns(3,5)P2). Acts in part as component of the retromer membrane-deforming SNX-BAR subcomplex. The SNX-BAR retromer mediates retrograde transport of cargo proteins from endosomes to the trans-Golgi network (TGN) and is involved in endosome-to-plasma membrane transport for cargo protein recycling. The SNX-BAR subcomplex functions to deform the donor membrane into a tubular profile called endosome-to-TGN transport carrier (ETC). Can sense membrane curvature and has in vitro vesicle-to-membrane remodeling activity. Required for retrograde endosome-to-TGN transport of TGN38. Promotes KALRN- and RHOG-dependent but retromer-independent membrane remodeling such as lamellipodium formation; the function is dependent on GEF activity of KALRN. This chain is Sorting nexin-2 (SNX2), found in Macaca fascicularis (Crab-eating macaque).